The sequence spans 667 residues: Long-chain-fatty-acid--CoA ligase ACSBG2 (667 aa).

Basic and acidic residues predominate over residues 1–14 (MTQEKKAEDPDRGM). The tract at residues 1 to 20 (MTQEKKAEDPDRGMDTTSAA) is disordered. Residues 227–235 (TSGTTGSPK), 418–423 (EIYGMT), Asp496, Arg511, and Arg624 each bind ATP.

The protein belongs to the ATP-dependent AMP-binding enzyme family. Bubblegum subfamily.

The protein localises to the cytoplasm. It is found in the membrane. It catalyses the reaction a long-chain fatty acid + ATP + CoA = a long-chain fatty acyl-CoA + AMP + diphosphate. The catalysed reaction is (5Z,8Z,11Z,14Z)-eicosatetraenoate + ATP + CoA = (5Z,8Z,11Z,14Z)-eicosatetraenoyl-CoA + AMP + diphosphate. The enzyme catalyses hexadecanoate + ATP + CoA = hexadecanoyl-CoA + AMP + diphosphate. It carries out the reaction (9Z)-octadecenoate + ATP + CoA = (9Z)-octadecenoyl-CoA + AMP + diphosphate. It catalyses the reaction (9Z,12Z)-octadecadienoate + ATP + CoA = (9Z,12Z)-octadecadienoyl-CoA + AMP + diphosphate. The catalysed reaction is tetracosanoate + ATP + CoA = tetracosanoyl-CoA + AMP + diphosphate. Functionally, catalyzes the conversion of fatty acids such as long chain and very long-chain fatty acids to their active form acyl-CoAs for both synthesis of cellular lipids, and degradation via beta-oxidation. Can activate diverse saturated, monosaturated and polyunsaturated fatty acids. Has increased ability to activate oleic and linoleic acid. May play a role in spermatogenesis. This is Long-chain-fatty-acid--CoA ligase ACSBG2 from Rattus norvegicus (Rat).